The chain runs to 1138 residues: Eukaryotic translation initiation factor 3 subunit A (1138 aa).

The region spanning 319-502 (LQRMAAHVLL…NSIYFGTDLT (184 aa)) is the PCI domain. 2 disordered regions span residues 590 to 633 (NNAR…NEIQ) and 817 to 1138 (ERFR…VKRR). 4 stretches are compositionally biased toward basic and acidic residues: residues 817 to 903 (ERFR…RVER), 923 to 967 (DRNE…KEND), 1003 to 1049 (GRDD…DQPQ), and 1058 to 1078 (DSPR…RDVR). Over residues 1082 to 1100 (PKEGGGGVSGGGAGGGGGN) the composition is skewed to gly residues. Positions 1107–1128 (PREEKAPPKREQAQDKENKAGD) are enriched in basic and acidic residues.

This sequence belongs to the eIF-3 subunit A family. As to quaternary structure, component of the eukaryotic translation initiation factor 3 (eIF-3) complex. The eIF-3 complex interacts with pix.

Its subcellular location is the cytoplasm. Functionally, RNA-binding component of the eukaryotic translation initiation factor 3 (eIF-3) complex, which is involved in protein synthesis of a specialized repertoire of mRNAs and, together with other initiation factors, stimulates binding of mRNA and methionyl-tRNAi to the 40S ribosome. The eIF-3 complex specifically targets and initiates translation of a subset of mRNAs involved in cell proliferation. The protein is Eukaryotic translation initiation factor 3 subunit A of Drosophila virilis (Fruit fly).